The primary structure comprises 1185 residues: Chromosome partition protein Smc (1185 aa).

ATP is bound at residue 32–39 (PNGSGKSN). Residues 167 to 494 (ISKYKSRKMD…KLNEKNSHLS (328 aa)) are a coiled coil. Positions 521-639 (TGIIGVVADQ…TDLKSAIEIA (119 aa)) constitute an SMC hinge domain. Positions 677 to 1031 (RSRKIEDLKK…KVIQEIEETM (355 aa)) form a coiled coil.

This sequence belongs to the SMC family. Homodimer.

It localises to the cytoplasm. Functionally, required for chromosome condensation and partitioning. The protein is Chromosome partition protein Smc of Halothermothrix orenii (strain H 168 / OCM 544 / DSM 9562).